Here is a 313-residue protein sequence, read N- to C-terminus: Formimidoylglutamase (313 aa).

6 residues coordinate Mn(2+): His-130, Asp-155, His-157, Asp-159, Asp-241, and Asp-243.

It belongs to the arginase family. It depends on Mn(2+) as a cofactor.

It catalyses the reaction N-formimidoyl-L-glutamate + H2O = formamide + L-glutamate. Its pathway is amino-acid degradation; L-histidine degradation into L-glutamate; L-glutamate from N-formimidoyl-L-glutamate (hydrolase route): step 1/1. Catalyzes the conversion of N-formimidoyl-L-glutamate to L-glutamate and formamide. The protein is Formimidoylglutamase of Salmonella arizonae (strain ATCC BAA-731 / CDC346-86 / RSK2980).